The sequence spans 309 residues: MVVQLISKPSKFSQSRFLDDIRNLSAAINAPYSERTTIEALSVYSHSFHNGVVLWRVTDRPGDALNYRFYSREPIDTVSIAASAGLLSPDIANTLGKLVTSWSSLYDGTPEESCDFDAEKGLVKAWVYFGGMRPLDDILGAEGVPESVRQHEKRFKELGLQKVRHVAVDYHKQTVNLYFRAQGPISFQQATAFNALAGAEPPSQSQFIEMREFLNAVGYTFAVTINIDSGDIERVGYYALKLPERSAKKWPAINAQLERFVQFAPSYDREEMNAVAWSFGERKTYVKFERSYCGELIPLIKGWGTTLSS.

Belongs to the aromatic prenyltransferase family.

Functionally, prenyltransferase that attaches isoprenoid moieties to carbon atoms of aromatic substrates in an enzyme-catalyzed Friedel-Crafts reaction. Shows specificity for dimethylallyl diphosphate (DMAPP) and does not accept geranyl diphosphate (GPP) or isopentenyl diphosphate (IPP). Prenylates the artificial substrate 2,7-dihydroxynaphthalene (2,7-DHN), as well as dihydrophenazine-1-carboxylic acid and 4-hydroxybenzoic acid at lower levels. Only traces of products are detected with aspulvinone E or flaviolin as substrates; and no product is formed with L-tryptophan, L-tyrosine, or 4-hydroxyphenylpyruvate. Ptf seems no to be involved in the prenylation reaction in the biosynthesis of aspulvinone H and J and the physiological function of ptf remains unknown. This Sclerotinia sclerotiorum (strain ATCC 18683 / 1980 / Ss-1) (White mold) protein is Aromatic prenyltransferase.